The following is a 331-amino-acid chain: Vacuolar protein sorting-associated protein 26B (331 aa).

The segment at 310 to 331 is disordered; that stretch reads AAQRYEGSNPEPTSAQAKEETD.

Belongs to the VPS26 family. Component of the heterotrimeric retromer cargo-selective complex (CSC) which is believed to associate with variable sorting nexins to form functionally distinct retromer complex variants.

The protein localises to the cytoplasm. It localises to the membrane. The protein resides in the endosome. Functionally, acts as a component of the retromer cargo-selective complex (CSC). The CSC is believed to be the core functional component of retromer or respective retromer complex variants acting to prevent missorting of selected transmembrane cargo proteins into the lysosomal degradation pathway. Retromer mediates retrograde transport of cargo proteins from endosomes to the trans-Golgi network (TGN). The chain is Vacuolar protein sorting-associated protein 26B (vps26b) from Danio rerio (Zebrafish).